We begin with the raw amino-acid sequence, 147 residues long: Hemoglobin subunit beta (147 aa).

Valine 2 bears the N-acetylvaline mark. Positions histidine 3–histidine 147 constitute a Globin domain. Threonine 13 carries the post-translational modification Phosphothreonine. Serine 45 carries the phosphoserine modification. The residue at position 60 (lysine 60) is an N6-acetyllysine. Residue histidine 64 participates in heme b binding. Position 83 is an N6-acetyllysine (lysine 83). Residue histidine 93 coordinates heme b. S-nitrosocysteine is present on cysteine 94. Position 145 is an N6-acetyllysine (lysine 145).

It belongs to the globin family. In terms of assembly, heterotetramer of two alpha chains and two beta chains. Red blood cells.

Functionally, involved in oxygen transport from the lung to the various peripheral tissues. The protein is Hemoglobin subunit beta (HBB) of Macaca fascicularis (Crab-eating macaque).